A 403-amino-acid polypeptide reads, in one-letter code: GPI-N-acetylgalactosamine transferase PGAP4 (403 aa).

The Cytoplasmic segment spans residues 1-22 (MTTSTSPAAMLLRRLRRLSWGS). The chain crosses the membrane as a helical span at residues 23–43 (TAVQLFILTVVTFGLLAPLAC). Over 44–264 (HRLLHSYFYL…INPEPMRILE (221 aa)) the chain is Lumenal. Residue Val-109 coordinates UDP-N-acetyl-alpha-D-galactosamine. 2 disulfides stabilise this stretch: Cys-132–Cys-136 and Cys-144–Cys-194. The DXD motif signature appears at 211–213 (EDD). A helical membrane pass occupies residues 265–285 (WVGVGMLLGPVLTWIYMRFAC). Over 286–287 (RP) the chain is Cytoplasmic. A helical transmembrane segment spans residues 288 to 308 (GFSWPVMLFFCLYSMGLVELV). The Lumenal segment spans residues 309–403 (GRHYFLELRR…LRYNFHPSLL (95 aa)). Cys-332 and Cys-333 are disulfide-bonded. The UDP-N-acetyl-alpha-D-galactosamine site is built by Thr-334, Pro-335, and Lys-362.

Belongs to the PGAP4 family. Glycosylated.

The protein localises to the golgi apparatus membrane. Golgi-resident glycosylphosphatidylinositol (GPI)-N-acetylgalactosamine transferase that catalyzes the N-acetyl-beta-D-galactosamine transfer from an UDP-N-acetyl-alpha-D-galactosamine to the 4-OH-position of first mannose of the glycosylphosphatidylinositol (GPI) of a GPI-anchored protein (GPI-AP). This modification occurs after the fatty acid remodeling step of the GPI-anchor maturation. This is GPI-N-acetylgalactosamine transferase PGAP4 from Mus musculus (Mouse).